We begin with the raw amino-acid sequence, 221 residues long: Octanoyltransferase (221 aa).

The 183-residue stretch at 38-220 (GEIPDTLLLL…GFREVLGDPG (183 aa)) folds into the BPL/LPL catalytic domain. Residues 84-91 (RGGDATFH), 149-151 (AIG), and 163-165 (GFA) contribute to the substrate site. The active-site Acyl-thioester intermediate is Cys-181.

This sequence belongs to the LipB family.

The protein localises to the cytoplasm. It carries out the reaction octanoyl-[ACP] + L-lysyl-[protein] = N(6)-octanoyl-L-lysyl-[protein] + holo-[ACP] + H(+). The protein operates within protein modification; protein lipoylation via endogenous pathway; protein N(6)-(lipoyl)lysine from octanoyl-[acyl-carrier-protein]: step 1/2. Functionally, catalyzes the transfer of endogenously produced octanoic acid from octanoyl-acyl-carrier-protein onto the lipoyl domains of lipoate-dependent enzymes. Lipoyl-ACP can also act as a substrate although octanoyl-ACP is likely to be the physiological substrate. In Rubrobacter xylanophilus (strain DSM 9941 / JCM 11954 / NBRC 16129 / PRD-1), this protein is Octanoyltransferase.